The primary structure comprises 914 residues: Protein translocase subunit SecA (914 aa).

Residues Gln87, 105-109 (GEGKT), and Asp500 each bind ATP. Zn(2+) is bound by residues Cys898, Cys900, Cys909, and His910.

This sequence belongs to the SecA family. Monomer and homodimer. Part of the essential Sec protein translocation apparatus which comprises SecA, SecYEG and auxiliary proteins SecDF-YajC and YidC. Zn(2+) serves as cofactor.

Its subcellular location is the cell inner membrane. The protein localises to the cytoplasm. The catalysed reaction is ATP + H2O + cellular proteinSide 1 = ADP + phosphate + cellular proteinSide 2.. Its function is as follows. Part of the Sec protein translocase complex. Interacts with the SecYEG preprotein conducting channel. Has a central role in coupling the hydrolysis of ATP to the transfer of proteins into and across the cell membrane, serving as an ATP-driven molecular motor driving the stepwise translocation of polypeptide chains across the membrane. The protein is Protein translocase subunit SecA of Acidithiobacillus ferrooxidans (strain ATCC 23270 / DSM 14882 / CIP 104768 / NCIMB 8455) (Ferrobacillus ferrooxidans (strain ATCC 23270)).